Here is a 159-residue protein sequence, read N- to C-terminus: Kojic acid related protein 6 (159 aa).

Its function is as follows. Negatively regulates mycelium growth and conidial formation and is required for stress tolerance. Plays a role in kojic acid synthesis in coordination with kojA, kojR and kojT where it acts upstream of kojA. The sequence is that of Kojic acid related protein 6 from Aspergillus oryzae (strain ATCC 42149 / RIB 40) (Yellow koji mold).